Consider the following 295-residue polypeptide: Probable endonuclease 4 (295 aa).

Zn(2+)-binding residues include H78, H118, E154, D188, H191, H225, D238, H240, and E270.

The protein belongs to the AP endonuclease 2 family. The cofactor is Zn(2+).

The enzyme catalyses Endonucleolytic cleavage to 5'-phosphooligonucleotide end-products.. In terms of biological role, endonuclease IV plays a role in DNA repair. It cleaves phosphodiester bonds at apurinic or apyrimidinic (AP) sites, generating a 3'-hydroxyl group and a 5'-terminal sugar phosphate. The polypeptide is Probable endonuclease 4 (Vibrio parahaemolyticus serotype O3:K6 (strain RIMD 2210633)).